A 107-amino-acid chain; its full sequence is Virulence factor PGA16 (107 aa).

Positions 1-18 (MRVFQIVYILIISNLIYA) are cleaved as a signal peptide. The interval 26–56 (SHHHKNDNNIADNTNNNNNNNNNNNNNNITN) is disordered. Residues 33–56 (NNIADNTNNNNNNNNNNNNNNITN) are compositionally biased toward low complexity. Residues N53 and N56 are each glycosylated (N-linked (GlcNAc...) asparagine). A lipid anchor (GPI-anchor amidated glycine) is attached at G76. The propeptide at 77–107 (VAAMGGILGQNGWFYGDAGLMAAIFGAMLLL) is removed in mature form.

Its subcellular location is the cell membrane. Its function is as follows. Cell surface GPI-anchored protein required for virulence. Mediates hyphal ramification which is important for the interaction with host cells. The polypeptide is Virulence factor PGA16 (PGA16) (Candida albicans (strain SC5314 / ATCC MYA-2876) (Yeast)).